The following is a 445-amino-acid chain: MALVDKHKVKRQRLDRICEGIRPQIMNGPLHPRPLVALLDGRDCTVEMPILKDLATVAFCDAQSTQEIHEKVLNEAVGAMMYHTITLTREDLEKFKALRVIVRIGSGYDNVDIKAAGELGIAVCNIPSAAVEETADSTVCHILNLYRRNTWLYQALREGTRVQSVEQIREVASGAARIRGETLGLIGFGRTGQAVAVRAKAFGFSVIFYDPYLQDGIERSLGVQRVYTLQDLLYQSDCVSLHCNLNEHNHHLINDFTIKQMRQGAFLVNAARGGLVDEKALAQALKEGRIRGAALDVHESEPFSFAQGPLKDAPNLICTPHTAWYSEQASLEMREAAATEIRRAITGRIPESLRNCVNKEFFVTSAPWSVIDQQAIHPELNGATYRYPPGIVGVAPGGLPPAMEGIIPGGIPVTHNLPTVAHPSQAPSPNQPTKHGDNREHPNEQ.

Asymmetric dimethylarginine is present on R22. NAD(+) contacts are provided by residues S106, 186-191 (IGFGRT), D210, 243-249 (CNLNEHN), 270-272 (AAR), and D296. R272 is a catalytic residue. E301 is a catalytic residue. The active-site Proton donor is the H321. 321–324 (HTAW) serves as a coordination point for NAD(+). The tract at residues 414-445 (THNLPTVAHPSQAPSPNQPTKHGDNREHPNEQ) is disordered. S428 is modified (phosphoserine; by HIPK2). The span at 434–445 (KHGDNREHPNEQ) shows a compositional bias: basic and acidic residues.

It belongs to the D-isomer specific 2-hydroxyacid dehydrogenase family. Interacts with HIPK2 and PNN. Interacts with the transcription factors ZNF217, BKLF, delta EF1/AREB6/ZEB, EVI-1 and Friend of GATA (FOG) via the consensus motif P-X-[DNS]-L-[STVA]. Also interacts with the C-terminus of adenovirus E1A protein. Can form a complex with BKLF on a CACCC-box oligonucleotide. Can form homodimers or heterodimers of CTBP1 and CTBP2. Interacts with NRIP1 and WIZ. Interacts with PRDM16; represses white adipose tissue (WAT)-specific genes expression. Interacts with MCRIP1. Phosphorylation by HIPK2 on Ser-428 induces proteasomal degradation. Found in all tissues except spleen and liver.

Its subcellular location is the nucleus. It is found in the synapse. In terms of biological role, corepressor targeting diverse transcription regulators. Isoform 2 probably acts as a scaffold for specialized synapses. Functions in brown adipose tissue (BAT) differentiation. The polypeptide is C-terminal-binding protein 2 (Ctbp2) (Mus musculus (Mouse)).